A 942-amino-acid chain; its full sequence is Apolipoprotein B receptor (942 aa).

5 disordered regions span residues 66–212, 240–269, 283–487, 501–607, and 671–942; these read GLRS…VTED, ERMV…QAML, DSLG…SPER, AGPE…VPWE, and EGRG…PKPQ. Basic and acidic residues-rich tracts occupy residues 106-123, 132-143, 240-252, 312-330, and 338-352; these read QAER…DARG, PEAEPGTHRDRS, ERMV…ERAR, EADK…EAEV, and EAER…HIAE. A compositionally biased stretch (acidic residues) spans 353–370; sequence EEAMGEQETEGSFEDEER. At Ser-364 the chain carries Phosphoserine. Residues 384 to 397 show a composition bias toward basic and acidic residues; the sequence is EEVRAEESSREKRN. Residues 415–425 are compositionally biased toward acidic residues; that stretch reads PDWEDSPEVST. Composition is skewed to basic and acidic residues over residues 444–458 and 466–475; these read LRVK…ELVR and QLEEGQKGQE. Ser-484 and Ser-520 each carry phosphoserine. Basic and acidic residues-rich tracts occupy residues 514–531 and 672–687; these read GVDR…EAGK and GRGE…ETTE. The span at 709 to 721 shows a compositional bias: acidic residues; that stretch reads QEIDGTEEGEQAE. Low complexity predominate over residues 837 to 853; it reads SRLDVSVPRSRVLLSRS. Basic residues predominate over residues 854–863; sequence SSRRRSRPSF.

As to quaternary structure, homodimer. There are 2 forms in macrophages, the membrane-binding proteins 200 kDa (MBP 200) and 235 kDa (MBP 235), that can be reduced into a single active ligand-binding species with intermediate mobility (MBP 200R). As to expression, highly expressed in spleen, lung and skeletal muscle, and weakly in brain, heart, kidney, and testis.

The protein localises to the cell membrane. In terms of biological role, macrophage receptor that binds to the apolipoprotein B48 (APOB) of dietary triglyceride (TG)-rich lipoproteins (TRL) or to a like domain of APOB in hypertriglyceridemic very low density lipoprotein (HTG-VLDL). Binds and internalizes TRL when out of the context of the macrophage. May provide essential lipids to reticuloendothelial cells. Could also be involved in foam cell formation with elevated TRL and remnant lipoprotein (RLP). Mediates the rapid high-affinity uptake of chylomicrons (CM), HTG-VLDL, and trypsinized (tryp) VLDL devoid of APOE in vitro in macrophages. The sequence is that of Apolipoprotein B receptor from Mus musculus (Mouse).